The chain runs to 117 residues: Photosystem II reaction center Psb28 protein (117 aa).

Belongs to the Psb28 family. As to quaternary structure, part of the photosystem II complex.

Its subcellular location is the cellular thylakoid membrane. The chain is Photosystem II reaction center Psb28 protein from Prochlorococcus marinus (strain MIT 9215).